The following is a 345-amino-acid chain: Large ribosomal subunit protein uL10 (345 aa).

The disordered stretch occupies residues serine 303–phenylalanine 345. Residues proline 305 to glutamate 318 show a composition bias toward low complexity. Residues alanine 319–proline 332 are compositionally biased toward basic and acidic residues.

Belongs to the universal ribosomal protein uL10 family. Part of the 50S ribosomal subunit. Forms part of the ribosomal stalk which helps the ribosome interact with GTP-bound translation factors. Forms a heptameric L10(L12)2(L12)2(L12)2 complex, where L10 forms an elongated spine to which the L12 dimers bind in a sequential fashion.

Its function is as follows. Forms part of the ribosomal stalk, playing a central role in the interaction of the ribosome with GTP-bound translation factors. This chain is Large ribosomal subunit protein uL10, found in Pyrobaculum aerophilum (strain ATCC 51768 / DSM 7523 / JCM 9630 / CIP 104966 / NBRC 100827 / IM2).